We begin with the raw amino-acid sequence, 426 residues long: 3-phosphoshikimate 1-carboxyvinyltransferase (426 aa).

Lys20, Ser21, and Arg25 together coordinate 3-phosphoshikimate. Lys20 contacts phosphoenolpyruvate. Positions 92 and 120 each coordinate phosphoenolpyruvate. 4 residues coordinate 3-phosphoshikimate: Ser166, Gln168, Asp312, and Lys339. Gln168 serves as a coordination point for phosphoenolpyruvate. The Proton acceptor role is filled by Asp312. Phosphoenolpyruvate-binding residues include Arg343 and Arg385.

This sequence belongs to the EPSP synthase family. In terms of assembly, monomer.

Its subcellular location is the cytoplasm. It carries out the reaction 3-phosphoshikimate + phosphoenolpyruvate = 5-O-(1-carboxyvinyl)-3-phosphoshikimate + phosphate. The protein operates within metabolic intermediate biosynthesis; chorismate biosynthesis; chorismate from D-erythrose 4-phosphate and phosphoenolpyruvate: step 6/7. Catalyzes the transfer of the enolpyruvyl moiety of phosphoenolpyruvate (PEP) to the 5-hydroxyl of shikimate-3-phosphate (S3P) to produce enolpyruvyl shikimate-3-phosphate and inorganic phosphate. The protein is 3-phosphoshikimate 1-carboxyvinyltransferase of Enterococcus faecalis (strain ATCC 700802 / V583).